A 243-amino-acid chain; its full sequence is 1-(5-phosphoribosyl)-5-[(5-phosphoribosylamino)methylideneamino] imidazole-4-carboxamide isomerase (243 aa).

D8 (proton acceptor) is an active-site residue. Residue D130 is the Proton donor of the active site.

It belongs to the HisA/HisF family.

Its subcellular location is the cytoplasm. The catalysed reaction is 1-(5-phospho-beta-D-ribosyl)-5-[(5-phospho-beta-D-ribosylamino)methylideneamino]imidazole-4-carboxamide = 5-[(5-phospho-1-deoxy-D-ribulos-1-ylimino)methylamino]-1-(5-phospho-beta-D-ribosyl)imidazole-4-carboxamide. It functions in the pathway amino-acid biosynthesis; L-histidine biosynthesis; L-histidine from 5-phospho-alpha-D-ribose 1-diphosphate: step 4/9. In Acinetobacter baumannii (strain SDF), this protein is 1-(5-phosphoribosyl)-5-[(5-phosphoribosylamino)methylideneamino] imidazole-4-carboxamide isomerase.